A 355-amino-acid polypeptide reads, in one-letter code: Alanine racemase (355 aa).

The active-site Proton acceptor; specific for D-alanine is the lysine 34. Lysine 34 bears the N6-(pyridoxal phosphate)lysine mark. Arginine 133 provides a ligand contact to substrate. Catalysis depends on tyrosine 249, which acts as the Proton acceptor; specific for L-alanine. A substrate-binding site is contributed by methionine 297.

The protein belongs to the alanine racemase family. Pyridoxal 5'-phosphate serves as cofactor.

The enzyme catalyses L-alanine = D-alanine. The protein operates within amino-acid biosynthesis; D-alanine biosynthesis; D-alanine from L-alanine: step 1/1. Catalyzes the interconversion of L-alanine and D-alanine. May also act on other amino acids. The protein is Alanine racemase (alr) of Rickettsia canadensis (strain McKiel).